Here is a 324-residue protein sequence, read N- to C-terminus: 1-deoxyxylulose-5-phosphate synthase YajO (324 aa).

Catalysis depends on Tyr-61, which acts as the Proton donor.

This sequence belongs to the aldo/keto reductase family. Aldo/keto reductase 2 subfamily.

The catalysed reaction is D-ribulose 5-phosphate + AH2 = 1-deoxy-D-xylulose 5-phosphate + A + H2O. NADH, NADPH or ATP do not increase activity. Functionally, catalyzes the conversion of ribulose 5-phosphate (Ru5P) to 1-deoxy-D-xylulose 5-phosphate (DXP), providing a direct route from pentoses to terpenes. May play a role in biosynthesis of DXP under conditions of thiamine starvation. The protein is 1-deoxyxylulose-5-phosphate synthase YajO (yajO) of Escherichia coli (strain K12).